An 807-amino-acid chain; its full sequence is G-type lectin S-receptor-like serine/threonine-protein kinase At1g61420 (807 aa).

The N-terminal stretch at 1–24 is a signal peptide; the sequence is MGKKWIVFFAYLLLSSFFISSSSA. A Bulb-type lectin domain is found at 25–144; the sequence is GITKESPLPI…FSGRTLWQSF (120 aa). The Extracellular portion of the chain corresponds to 25 to 426; that stretch reads GITKESPLPI…ELGGNKRKKA (402 aa). N-linked (GlcNAc...) asparagine glycosylation is found at Asn-53, Asn-94, Asn-117, Asn-134, Asn-236, and Asn-267. In terms of domain architecture, EGF-like; atypical spans 278–314; sequence PEHSCDYYGVCGPFGLCVKSVPPKCTCFKGFVPKLIE. Intrachain disulfides connect Cys-282-Cys-294 and Cys-288-Cys-302. N-linked (GlcNAc...) asparagine glycosylation is found at Asn-320, Asn-336, and Asn-375. Residues 333 to 413 enclose the PAN domain; it reads CQGNSTGKYA…EGGELLSIRL (81 aa). 2 cysteine pairs are disulfide-bonded: Cys-368–Cys-389 and Cys-372–Cys-378. Residues 427–447 traverse the membrane as a helical segment; that stretch reads ITASIVSLSLVVIIAFVAFCF. The Cytoplasmic portion of the chain corresponds to 448 to 807; the sequence is WRYRVKHNAD…EMTKSVILGR (360 aa). Residues 494-779 enclose the Protein kinase domain; sequence FSISNKLGQG…DLPPPEQPTF (286 aa). ATP-binding positions include 500 to 508 and Lys-522; that span reads LGQGGFGPV. Phosphoserine is present on residues Ser-528 and Ser-543. The caM-binding stretch occupies residues 583-600; the sequence is RKRLEIDWPKRLDIIQGI. Asp-619 (proton acceptor) is an active-site residue. A phosphoserine mark is found at Ser-623 and Ser-636. The residue at position 653 (Thr-653) is a Phosphothreonine. Phosphoserine is present on residues Ser-696 and Ser-790.

Belongs to the protein kinase superfamily. Ser/Thr protein kinase family.

Its subcellular location is the cell membrane. The catalysed reaction is L-seryl-[protein] + ATP = O-phospho-L-seryl-[protein] + ADP + H(+). It catalyses the reaction L-threonyl-[protein] + ATP = O-phospho-L-threonyl-[protein] + ADP + H(+). The sequence is that of G-type lectin S-receptor-like serine/threonine-protein kinase At1g61420 from Arabidopsis thaliana (Mouse-ear cress).